The chain runs to 733 residues: MEGPGLEFTEAIIDNGKLGKHVVRFEAGLLAQQADGSAAVYLDGDTMLLSATTAAKTPRDSIDFFPLTVDVEERMYAAGRIPGSFFRREGRPSEGAILACRLIDRPLRPSFVKGLRNEVQVVVTVMALNPAVYYDVVAINAASMSTQLAGLPFSGPIGGVRMALIDDQWVCFPSVDQRKESTFDMVVAGRVLADGDVAIMMVEAESTPATWGLVRGGRTAPTEEVVATGLEAAKPFIKVLCDAQVALAAKLPKETYDFPVFKDYEDDVYAAVEEKAADELSRIEQIAAKLERQEAESELKARIKAELAETFPEREAEISGAFKAVMKKIVRKRVLDEGVRIDGRGPRDIRSLSAEVGIIPRVHGSALFQRGETQILGVSTLNMLDMEQKLDTLSPENTRRYMHNYNMPPYSTGETGRVGSPKRREIGHGNLAERALIPVLPTREEFPYAIREVSEAIGSNGSTSMGSVCASTLALLNAGVPLRASVAGIAMGLMSETDEDGKTKYLALTDILGAEDALGDMDFKVAGTSEFVTALQLDTKLDGIPADVLAGALKQAKEARTAILEVMNEAIDSPDEMAPTAPRIITVHIPVDKIGEVIGPKGKMINQIQDDTGANISIEDDGTIFIGADNGDSAESARSMINAIANPQMPEVGERYLGTVVKTTSFGAFVSLLPGKDGLLHISKMRDLNDGKRVEAVEDVLSVGQKIQVEIAEVDDRGKLSLVLASDEDDADE.

Residues N404–R424 form a disordered region. Mg(2+)-binding residues include D516 and D522. Positions P582–I641 constitute a KH domain. One can recognise an S1 motif domain in the interval G653–A725.

It belongs to the polyribonucleotide nucleotidyltransferase family. Mg(2+) is required as a cofactor.

The protein resides in the cytoplasm. The catalysed reaction is RNA(n+1) + phosphate = RNA(n) + a ribonucleoside 5'-diphosphate. Its function is as follows. Involved in mRNA degradation. Catalyzes the phosphorolysis of single-stranded polyribonucleotides processively in the 3'- to 5'-direction. This Cutibacterium acnes (strain DSM 16379 / KPA171202) (Propionibacterium acnes) protein is Polyribonucleotide nucleotidyltransferase.